Reading from the N-terminus, the 243-residue chain is uncharacterized protein (243 aa).

The span at 1 to 18 (MSNSHYNNYQQQQPHSSN) shows a compositional bias: low complexity. A disordered region spans residues 1–30 (MSNSHYNNYQQQQPHSSNGDPEYQHQQMVH). Residues 38-232 (GHGMKTVAVP…MHYKEYREYQ (195 aa)) enclose the AMMECR1 domain.

This is an uncharacterized protein from Drosophila melanogaster (Fruit fly).